The chain runs to 336 residues: Fructose-1,6-bisphosphatase class 1 (336 aa).

Mg(2+)-binding residues include Glu-90, Asp-112, Leu-114, and Asp-115. Residues 115–118 (DGSS), Asn-211, and Lys-277 each bind substrate. Glu-283 lines the Mg(2+) pocket.

This sequence belongs to the FBPase class 1 family. Homotetramer. The cofactor is Mg(2+).

Its subcellular location is the cytoplasm. It catalyses the reaction beta-D-fructose 1,6-bisphosphate + H2O = beta-D-fructose 6-phosphate + phosphate. It participates in carbohydrate biosynthesis; gluconeogenesis. In Pseudomonas syringae pv. syringae (strain B728a), this protein is Fructose-1,6-bisphosphatase class 1.